The following is a 122-amino-acid chain: Large ribosomal subunit protein uL14 (122 aa).

Belongs to the universal ribosomal protein uL14 family. In terms of assembly, part of the 50S ribosomal subunit. Forms a cluster with proteins L3 and L19. In the 70S ribosome, L14 and L19 interact and together make contacts with the 16S rRNA in bridges B5 and B8.

Its function is as follows. Binds to 23S rRNA. Forms part of two intersubunit bridges in the 70S ribosome. This chain is Large ribosomal subunit protein uL14, found in Desulfosudis oleivorans (strain DSM 6200 / JCM 39069 / Hxd3) (Desulfococcus oleovorans).